The chain runs to 219 residues: NADH-quinone oxidoreductase subunit C (219 aa).

It belongs to the complex I 30 kDa subunit family. As to quaternary structure, NDH-1 is composed of 14 different subunits. Subunits NuoB, C, D, E, F, and G constitute the peripheral sector of the complex.

It is found in the cell inner membrane. It catalyses the reaction a quinone + NADH + 5 H(+)(in) = a quinol + NAD(+) + 4 H(+)(out). NDH-1 shuttles electrons from NADH, via FMN and iron-sulfur (Fe-S) centers, to quinones in the respiratory chain. The immediate electron acceptor for the enzyme in this species is believed to be ubiquinone. Couples the redox reaction to proton translocation (for every two electrons transferred, four hydrogen ions are translocated across the cytoplasmic membrane), and thus conserves the redox energy in a proton gradient. The sequence is that of NADH-quinone oxidoreductase subunit C from Methylorubrum populi (strain ATCC BAA-705 / NCIMB 13946 / BJ001) (Methylobacterium populi).